The primary structure comprises 123 residues: NADH-quinone oxidoreductase subunit A (123 aa).

Helical transmembrane passes span 11-31 (YLPIAIFFGIAVLLSVLIMIL), 68-88 (LVAILFIIFDLEIAFLVPWAI), and 93-113 (IGKMGFFSMMFFLFVLIIGFI).

This sequence belongs to the complex I subunit 3 family. In terms of assembly, NDH-1 is composed of 14 different subunits. Subunits NuoA, H, J, K, L, M, N constitute the membrane sector of the complex.

It is found in the cell inner membrane. It catalyses the reaction a quinone + NADH + 5 H(+)(in) = a quinol + NAD(+) + 4 H(+)(out). Functionally, NDH-1 shuttles electrons from NADH, via FMN and iron-sulfur (Fe-S) centers, to quinones in the respiratory chain. The immediate electron acceptor for the enzyme in this species is believed to be ubiquinone. Couples the redox reaction to proton translocation (for every two electrons transferred, four hydrogen ions are translocated across the cytoplasmic membrane), and thus conserves the redox energy in a proton gradient. This Rickettsia prowazekii (strain Madrid E) protein is NADH-quinone oxidoreductase subunit A.